We begin with the raw amino-acid sequence, 160 residues long: Small ribosomal subunit protein bS16 (160 aa).

The tract at residues 115-139 (GGPTTEATRPKKKVSAKKAAKAVES) is disordered. The segment covering 124–134 (PKKKVSAKKAA) has biased composition (basic residues).

This sequence belongs to the bacterial ribosomal protein bS16 family.

This Mycobacterium leprae (strain Br4923) protein is Small ribosomal subunit protein bS16.